Consider the following 502-residue polypeptide: Glutamate--tRNA ligase (502 aa).

The 'HIGH' region motif lies at 12-22 (PSPTGYLHVGG). The 'KMSKS' region motif lies at 259 to 263 (KLSKR). K262 is an ATP binding site.

It belongs to the class-I aminoacyl-tRNA synthetase family. Glutamate--tRNA ligase type 1 subfamily. In terms of assembly, monomer.

The protein localises to the cytoplasm. It catalyses the reaction tRNA(Glu) + L-glutamate + ATP = L-glutamyl-tRNA(Glu) + AMP + diphosphate. In terms of biological role, catalyzes the attachment of glutamate to tRNA(Glu) in a two-step reaction: glutamate is first activated by ATP to form Glu-AMP and then transferred to the acceptor end of tRNA(Glu). The polypeptide is Glutamate--tRNA ligase (Pelodictyon phaeoclathratiforme (strain DSM 5477 / BU-1)).